The primary structure comprises 157 residues: Large ribosomal subunit protein eL24 (157 aa).

Residues 94-157 (RNQKPEVRKA…ISAPRVGGKR (64 aa)) form a disordered region. Over residues 96-117 (QKPEVRKAQREQAIRAAKESKK) the composition is skewed to basic and acidic residues. Over residues 123–140 (KKPAAASAKTSAKTAQKP) the composition is skewed to low complexity.

This sequence belongs to the eukaryotic ribosomal protein eL24 family. In terms of assembly, component of the large ribosomal subunit.

It is found in the cytoplasm. In terms of biological role, component of the large ribosomal subunit. The ribosome is a large ribonucleoprotein complex responsible for the synthesis of proteins in the cell. The polypeptide is Large ribosomal subunit protein eL24 (rpl24) (Gillichthys mirabilis (Long-jawed mudsucker)).